A 179-amino-acid chain; its full sequence is ATP synthase subunit delta (179 aa).

This sequence belongs to the ATPase delta chain family. In terms of assembly, F-type ATPases have 2 components, F(1) - the catalytic core - and F(0) - the membrane proton channel. F(1) has five subunits: alpha(3), beta(3), gamma(1), delta(1), epsilon(1). F(0) has three main subunits: a(1), b(2) and c(10-14). The alpha and beta chains form an alternating ring which encloses part of the gamma chain. F(1) is attached to F(0) by a central stalk formed by the gamma and epsilon chains, while a peripheral stalk is formed by the delta and b chains.

The protein resides in the cell inner membrane. In terms of biological role, f(1)F(0) ATP synthase produces ATP from ADP in the presence of a proton or sodium gradient. F-type ATPases consist of two structural domains, F(1) containing the extramembraneous catalytic core and F(0) containing the membrane proton channel, linked together by a central stalk and a peripheral stalk. During catalysis, ATP synthesis in the catalytic domain of F(1) is coupled via a rotary mechanism of the central stalk subunits to proton translocation. Its function is as follows. This protein is part of the stalk that links CF(0) to CF(1). It either transmits conformational changes from CF(0) to CF(1) or is implicated in proton conduction. This is ATP synthase subunit delta from Burkholderia mallei (strain SAVP1).